Consider the following 164-residue polypeptide: Protein-export protein SecB (164 aa).

This sequence belongs to the SecB family. In terms of assembly, homotetramer, a dimer of dimers. One homotetramer interacts with 1 SecA dimer.

Its subcellular location is the cytoplasm. In terms of biological role, one of the proteins required for the normal export of preproteins out of the cell cytoplasm. It is a molecular chaperone that binds to a subset of precursor proteins, maintaining them in a translocation-competent state. It also specifically binds to its receptor SecA. The protein is Protein-export protein SecB of Caulobacter sp. (strain K31).